A 328-amino-acid chain; its full sequence is Protein phosphatase 1 regulatory inhibitor subunit PPP1R7 homolog (328 aa).

LRR repeat units lie at residues 13-36, 37-59, 61-82, 86-110, 111-130, 131-153, 154-177, 179-196, 197-221, 223-240, 241-264, 266-287, and 289-312; these read IGDSNNVLDLTSYQLHSLDTVELP, PNLIELDLTANRLSGLDSRIAQL, TLKKLSLRQNLIDDSAVEPLSH, LSDLEELVLRDNKLAKVPDVSIFTK, LLVYDISFNEITSLEGISKA, SSTLKELYVSKNEVNKIMEIEHL, HNLQILELGSNRLRVMENLENFTK, EELWLGRNRIKVVNLCGL, KCIKKISLQSNRLTSMKGFEECVAL, ELYLSHNGISKMEGLSAL, VNLRVLDVSNNKLTSVDDIQNLTK, EDLWLNDNQIESLEAITEAVTG, and KEKLTTIYLENNPCAKSSDYVAAV.

In terms of assembly, interacts with human protein phosphatase PPP1C.

Inhibitor of protein-phosphatase 1 (PP1). Binds to and inhibits PP1 activity. This chain is Protein phosphatase 1 regulatory inhibitor subunit PPP1R7 homolog, found in Arabidopsis thaliana (Mouse-ear cress).